A 141-amino-acid polypeptide reads, in one-letter code: Proteasome maturation protein (141 aa).

Lysine 39 participates in a covalent cross-link: Glycyl lysine isopeptide (Lys-Gly) (interchain with G-Cter in SUMO2). Residues 68-72 (RNIQG) carry the High-affinity association with the preproteasome motif.

Belongs to the POMP/UMP1 family. Constituent of preproteasomes, but not of mature 20S proteasomes. Within the preproteasome, may directly interact with PSMB1/beta6, PSMB4/beta7, PSMB5/beta5, PSMB6/beta1 and PSMB9/beta1i. Interaction with PSMB8/beta5i has been observed in PubMed:10973495, but not in PubMed:10926487. Forms tetramers. In terms of tissue distribution, strongly expressed from the basal layer to the granular layer of healthy epidermis, whereas in KLICK patients there is a gradual decrease of expression toward the granular layer.

It localises to the cytoplasm. The protein resides in the cytosol. Its subcellular location is the nucleus. It is found in the microsome membrane. Its function is as follows. Molecular chaperone essential for the assembly of standard proteasomes and immunoproteasomes. Degraded after completion of proteasome maturation. Mediates the association of 20S preproteasome with the endoplasmic reticulum. The chain is Proteasome maturation protein from Homo sapiens (Human).